A 76-amino-acid chain; its full sequence is cAMP-dependent protein kinase inhibitor alpha (76 aa).

An N-acetylthreonine modification is found at threonine 2. The interval 49–76 (KTEGEEDAQRNSTEQSGEAQGEAAKSES) is disordered.

It belongs to the PKI family.

Extremely potent competitive inhibitor of cAMP-dependent protein kinase activity, this protein interacts with the catalytic subunit of the enzyme after the cAMP-induced dissociation of its regulatory chains. The sequence is that of cAMP-dependent protein kinase inhibitor alpha (PKIA) from Bos taurus (Bovine).